The sequence spans 98 residues: NADH-ubiquinone oxidoreductase chain 4L (98 aa).

3 consecutive transmembrane segments (helical) span residues 1–21, 29–49, and 61–81; these read MSMVYINIFLAFILSLMGMLV, SLLCLEGMMLSLFVMMSVTIL, and IVLLVFAACEAALGLSLLVMV.

Belongs to the complex I subunit 4L family. Core subunit of respiratory chain NADH dehydrogenase (Complex I) which is composed of 45 different subunits.

It is found in the mitochondrion inner membrane. It carries out the reaction a ubiquinone + NADH + 5 H(+)(in) = a ubiquinol + NAD(+) + 4 H(+)(out). Core subunit of the mitochondrial membrane respiratory chain NADH dehydrogenase (Complex I) which catalyzes electron transfer from NADH through the respiratory chain, using ubiquinone as an electron acceptor. Part of the enzyme membrane arm which is embedded in the lipid bilayer and involved in proton translocation. This is NADH-ubiquinone oxidoreductase chain 4L (MT-ND4L) from Vulpes vulpes (Red fox).